We begin with the raw amino-acid sequence, 434 residues long: 5-methylthioadenosine/S-adenosylhomocysteine deaminase (434 aa).

Zn(2+) is bound by residues H66 and H68. Positions 95, 148, and 188 each coordinate substrate. H215 lines the Zn(2+) pocket. Residues E218 and D304 each coordinate substrate. D304 contacts Zn(2+).

The protein belongs to the metallo-dependent hydrolases superfamily. MTA/SAH deaminase family. It depends on Zn(2+) as a cofactor.

The enzyme catalyses S-adenosyl-L-homocysteine + H2O + H(+) = S-inosyl-L-homocysteine + NH4(+). It carries out the reaction S-methyl-5'-thioadenosine + H2O + H(+) = S-methyl-5'-thioinosine + NH4(+). In terms of biological role, catalyzes the deamination of 5-methylthioadenosine and S-adenosyl-L-homocysteine into 5-methylthioinosine and S-inosyl-L-homocysteine, respectively. Is also able to deaminate adenosine. The sequence is that of 5-methylthioadenosine/S-adenosylhomocysteine deaminase from Shouchella clausii (strain KSM-K16) (Alkalihalobacillus clausii).